We begin with the raw amino-acid sequence, 397 residues long: Phosphoglycerate kinase (397 aa).

Substrate contacts are provided by residues 21-23 (DMN), Arg-36, 59-62 (HLGR), Arg-114, and Arg-147. Residues Lys-198, Glu-320, and 346–349 (GGDT) contribute to the ATP site.

The protein belongs to the phosphoglycerate kinase family. As to quaternary structure, monomer.

It is found in the cytoplasm. The enzyme catalyses (2R)-3-phosphoglycerate + ATP = (2R)-3-phospho-glyceroyl phosphate + ADP. The protein operates within carbohydrate degradation; glycolysis; pyruvate from D-glyceraldehyde 3-phosphate: step 2/5. In Neisseria gonorrhoeae (strain NCCP11945), this protein is Phosphoglycerate kinase.